We begin with the raw amino-acid sequence, 424 residues long: Serine--tRNA ligase (424 aa).

Residue 233–235 (TAE) coordinates L-serine. ATP-binding positions include 264–266 (RRE) and Val280. Position 287 (Glu287) interacts with L-serine. Residue 351–354 (EISS) participates in ATP binding. Ser386 lines the L-serine pocket.

It belongs to the class-II aminoacyl-tRNA synthetase family. Type-1 seryl-tRNA synthetase subfamily. Homodimer. The tRNA molecule binds across the dimer.

Its subcellular location is the cytoplasm. The catalysed reaction is tRNA(Ser) + L-serine + ATP = L-seryl-tRNA(Ser) + AMP + diphosphate + H(+). It catalyses the reaction tRNA(Sec) + L-serine + ATP = L-seryl-tRNA(Sec) + AMP + diphosphate + H(+). It participates in aminoacyl-tRNA biosynthesis; selenocysteinyl-tRNA(Sec) biosynthesis; L-seryl-tRNA(Sec) from L-serine and tRNA(Sec): step 1/1. Functionally, catalyzes the attachment of serine to tRNA(Ser). Is also able to aminoacylate tRNA(Sec) with serine, to form the misacylated tRNA L-seryl-tRNA(Sec), which will be further converted into selenocysteinyl-tRNA(Sec). In Kosmotoga olearia (strain ATCC BAA-1733 / DSM 21960 / TBF 19.5.1), this protein is Serine--tRNA ligase.